The following is a 176-amino-acid chain: NAD(P)H-quinone oxidoreductase subunit 6, chloroplastic (176 aa).

The next 5 helical transmembrane spans lie at 10 to 30, 33 to 53, 60 to 80, 95 to 115, and 152 to 172; these read ILVL…VLLT, IYSA…YFLL, VAQL…AVMF, IGDG…MTTI, and FYLP…GAIT.

The protein belongs to the complex I subunit 6 family. In terms of assembly, NDH is composed of at least 16 different subunits, 5 of which are encoded in the nucleus.

The protein resides in the plastid. It localises to the chloroplast thylakoid membrane. The catalysed reaction is a plastoquinone + NADH + (n+1) H(+)(in) = a plastoquinol + NAD(+) + n H(+)(out). It carries out the reaction a plastoquinone + NADPH + (n+1) H(+)(in) = a plastoquinol + NADP(+) + n H(+)(out). Functionally, NDH shuttles electrons from NAD(P)H:plastoquinone, via FMN and iron-sulfur (Fe-S) centers, to quinones in the photosynthetic chain and possibly in a chloroplast respiratory chain. The immediate electron acceptor for the enzyme in this species is believed to be plastoquinone. Couples the redox reaction to proton translocation, and thus conserves the redox energy in a proton gradient. The protein is NAD(P)H-quinone oxidoreductase subunit 6, chloroplastic (ndhG) of Zea mays (Maize).